The primary structure comprises 469 residues: Neuraminidase (469 aa).

The Intravirion portion of the chain corresponds to 1 to 6 (MNPNQK). The helical transmembrane segment at 7–29 (IITIGSVSLTIATACSLMQIAIL) threads the bilayer. The interval 11–33 (GSVSLTIATACSLMQIAILATTV) is involved in apical transport and lipid raft association. The Virion surface segment spans residues 30-469 (ATTVTLHFKQ…DGANINFMPI (440 aa)). The interval 36 to 88 (HFKQHECDSPASNQVMPCEPIIIERNITEIVYLNNTTIEKEICPEVVEYRNWS) is hypervariable stalk region. 4 N-linked (GlcNAc...) asparagine; by host glycosylation sites follow: Asn-61, Asn-69, Asn-70, and Asn-86. The segment at 91–469 (QCQITGFAPF…DGANINFMPI (379 aa)) is head of neuraminidase. Intrachain disulfides connect Cys-92–Cys-417, Cys-124–Cys-129, Cys-183–Cys-230, Cys-232–Cys-237, Cys-278–Cys-291, Cys-280–Cys-289, Cys-318–Cys-337, and Cys-421–Cys-447. Residue Arg-118 coordinates substrate. An N-linked (GlcNAc...) asparagine; by host glycan is attached at Asn-146. Asp-151 functions as the Proton donor/acceptor in the catalytic mechanism. Arg-152 provides a ligand contact to substrate. Asn-200 and Asn-234 each carry an N-linked (GlcNAc...) asparagine; by host glycan. 276–277 (EE) is a binding site for substrate. Arg-292 is a binding site for substrate. Ca(2+) contacts are provided by Asp-293, Gly-297, and Asp-324. The segment at 325-349 (TPRNDDSSSNSNCRDPNNERGNPGV) is disordered. Arg-371 contributes to the substrate binding site. An N-linked (GlcNAc...) asparagine; by host glycan is attached at Asn-402. The Nucleophile role is filled by Tyr-406.

The protein belongs to the glycosyl hydrolase 34 family. In terms of assembly, homotetramer. Ca(2+) is required as a cofactor. N-glycosylated.

It is found in the virion membrane. The protein resides in the host apical cell membrane. It carries out the reaction Hydrolysis of alpha-(2-&gt;3)-, alpha-(2-&gt;6)-, alpha-(2-&gt;8)- glycosidic linkages of terminal sialic acid residues in oligosaccharides, glycoproteins, glycolipids, colominic acid and synthetic substrates.. Inhibited by the neuraminidase inhibitors zanamivir (Relenza) and oseltamivir (Tamiflu). These drugs interfere with the release of progeny virus from infected cells and are effective against all influenza strains. Resistance to neuraminidase inhibitors is quite rare. Its function is as follows. Catalyzes the removal of terminal sialic acid residues from viral and cellular glycoconjugates. Cleaves off the terminal sialic acids on the glycosylated HA during virus budding to facilitate virus release. Additionally helps virus spread through the circulation by further removing sialic acids from the cell surface. These cleavages prevent self-aggregation and ensure the efficient spread of the progeny virus from cell to cell. Otherwise, infection would be limited to one round of replication. Described as a receptor-destroying enzyme because it cleaves a terminal sialic acid from the cellular receptors. May facilitate viral invasion of the upper airways by cleaving the sialic acid moieties on the mucin of the airway epithelial cells. Likely to plays a role in the budding process through its association with lipid rafts during intracellular transport. May additionally display a raft-association independent effect on budding. Plays a role in the determination of host range restriction on replication and virulence. Sialidase activity in late endosome/lysosome traffic seems to enhance virus replication. This is Neuraminidase from Aves (Human).